We begin with the raw amino-acid sequence, 119 residues long: MKALSPVRGCYEAVCCLSERSLAIARGRGKGPAAEEPLSLLDDMNHCYSRLRELVPGVPRGTQLSQVEILQRVIDYILDLQVVLAEPAPGPPDGPHLPIQTAELAPELVISNDKRSFCH.

One can recognise a bHLH domain in the interval 28–80 (RGKGPAAEEPLSLLDDMNHCYSRLRELVPGVPRGTQLSQVEILQRVIDYILDL).

As to quaternary structure, homodimer, and heterodimer with other HLH proteins. Interacts with COPS5 and COPS7A. Interacts with IFI204. Interacts with GATA4 and NKX2-5. Interacts with ANKRD2; both proteins cooperate in myoblast differentiation. Interacts with CLOCK and BMAL1.

It localises to the nucleus. Functionally, transcriptional regulator (lacking a basic DNA binding domain) which negatively regulates the basic helix-loop-helix (bHLH) transcription factors by forming heterodimers and inhibiting their DNA binding and transcriptional activity. Implicated in regulating a variety of cellular processes, including cellular growth, senescence, differentiation, apoptosis, angiogenesis, and neoplastic transformation. Involved in myogenesis by inhibiting skeletal muscle and cardiac myocyte differentiation and promoting muscle precursor cells proliferation. Inhibits the binding of E2A-containing protein complexes to muscle creatine kinase E-box enhancer. Regulates the circadian clock by repressing the transcriptional activator activity of the CLOCK-BMAL1 heterodimer. This chain is DNA-binding protein inhibitor ID-3 (ID3), found in Canis lupus familiaris (Dog).